We begin with the raw amino-acid sequence, 105 residues long: Large ribosomal subunit protein uL24 (105 aa).

The protein belongs to the universal ribosomal protein uL24 family. Part of the 50S ribosomal subunit.

Functionally, one of two assembly initiator proteins, it binds directly to the 5'-end of the 23S rRNA, where it nucleates assembly of the 50S subunit. In terms of biological role, one of the proteins that surrounds the polypeptide exit tunnel on the outside of the subunit. This is Large ribosomal subunit protein uL24 from Parvibaculum lavamentivorans (strain DS-1 / DSM 13023 / NCIMB 13966).